Here is a 1576-residue protein sequence, read N- to C-terminus: Spermatogenesis-associated protein 31D1 (1576 aa).

A helical transmembrane segment spans residues 29–49; sequence FICLSGLGLFILYLFYVVLTL. Disordered stretches follow at residues 170–197, 542–572, 782–801, 952–1033, and 1293–1347; these read FTLA…PPPP, HESP…QGQS, KDHL…RSNS, SQGD…TDFQ, and RVSP…PPPE. Pro residues predominate over residues 546 to 565; it reads VLPPPQPLSLPSTQPLPLPQ. The segment covering 966–980 has biased composition (polar residues); it reads RSTFQGEKLGTTSSV. Positions 1004–1019 are enriched in basic and acidic residues; the sequence is QFSDTDHDLIETDSKD. A compositionally biased stretch (polar residues) spans 1020-1032; that stretch reads GASTSLRRGTTDF.

Belongs to the SPATA31 family.

It is found in the membrane. In terms of biological role, may play a role in spermatogenesis. The sequence is that of Spermatogenesis-associated protein 31D1 (SPATA31D1) from Homo sapiens (Human).